We begin with the raw amino-acid sequence, 451 residues long: MENELFLQKQNFLVLGLAKSGYAAASILHEKGINVVVNDQKAFEENEPAQRLAERGIEVICGEHPTSLFDQHHITILIKNPGIPYENIMVEEAQRRGIPVWTEIELAYYITNAKFIGITGSNGKTTTTTLIYEMLKADSIKTLIAGNIGTVASEVAYHADGDEWIVTELSSFQLMGTHAFRPEIGLILNVFDAHLDYHHSRENYEKAKQNVYLHQLESDTAIVNQSDETVVRLAESGKAGTVPFSVHQELSSGAFIKDGMLMFGDEAILPVDDIVLPGAHNLENILAAVAAAKTAGASNKAIQKVLTSFTGVKHRLQYVTAIQNRKFYNDSKATNILATSKALSAFKAPVILLAGGLDRGNGFDDLKPYMDNVKAVLTFGQTAPKIEKLGNELGIQHVKRVDNVEQAVSAAFALSNEGDVILLSPACASWDQFKTFEERGDMFIDAVHMLK.

Glycine 120–threonine 126 contributes to the ATP binding site.

The protein belongs to the MurCDEF family.

Its subcellular location is the cytoplasm. It catalyses the reaction UDP-N-acetyl-alpha-D-muramoyl-L-alanine + D-glutamate + ATP = UDP-N-acetyl-alpha-D-muramoyl-L-alanyl-D-glutamate + ADP + phosphate + H(+). It functions in the pathway cell wall biogenesis; peptidoglycan biosynthesis. Its function is as follows. Cell wall formation. Catalyzes the addition of glutamate to the nucleotide precursor UDP-N-acetylmuramoyl-L-alanine (UMA). This Bacillus velezensis (strain DSM 23117 / BGSC 10A6 / LMG 26770 / FZB42) (Bacillus amyloliquefaciens subsp. plantarum) protein is UDP-N-acetylmuramoylalanine--D-glutamate ligase.